The sequence spans 364 residues: Chorismate synthase (364 aa).

Residues 41 to 60 (MQHDLDRRRPGTSRYTTARR) are disordered. Arg48 and Arg54 together coordinate NADP(+). FMN contacts are provided by residues 125–127 (RSS), 238–239 (NA), Gly278, 293–297 (KPTSS), and Arg319.

It belongs to the chorismate synthase family. As to quaternary structure, homotetramer. FMNH2 serves as cofactor.

It carries out the reaction 5-O-(1-carboxyvinyl)-3-phosphoshikimate = chorismate + phosphate. It functions in the pathway metabolic intermediate biosynthesis; chorismate biosynthesis; chorismate from D-erythrose 4-phosphate and phosphoenolpyruvate: step 7/7. Its function is as follows. Catalyzes the anti-1,4-elimination of the C-3 phosphate and the C-6 proR hydrogen from 5-enolpyruvylshikimate-3-phosphate (EPSP) to yield chorismate, which is the branch point compound that serves as the starting substrate for the three terminal pathways of aromatic amino acid biosynthesis. This reaction introduces a second double bond into the aromatic ring system. This chain is Chorismate synthase, found in Shewanella putrefaciens (strain CN-32 / ATCC BAA-453).